Reading from the N-terminus, the 206-residue chain is Nucleoside triphosphate pyrophosphatase (206 aa).

Residue D76 is the Proton acceptor of the active site.

The protein belongs to the Maf family. A divalent metal cation is required as a cofactor.

The protein resides in the cytoplasm. The enzyme catalyses a ribonucleoside 5'-triphosphate + H2O = a ribonucleoside 5'-phosphate + diphosphate + H(+). The catalysed reaction is a 2'-deoxyribonucleoside 5'-triphosphate + H2O = a 2'-deoxyribonucleoside 5'-phosphate + diphosphate + H(+). Its function is as follows. Nucleoside triphosphate pyrophosphatase. May have a dual role in cell division arrest and in preventing the incorporation of modified nucleotides into cellular nucleic acids. This chain is Nucleoside triphosphate pyrophosphatase, found in Streptomyces coelicolor (strain ATCC BAA-471 / A3(2) / M145).